A 367-amino-acid chain; its full sequence is tRNA pseudouridine synthase D (367 aa).

The active-site Nucleophile is D80. The TRUD domain occupies 156 to 316 (GIPNWFGEQR…LKQERRALRL (161 aa)).

The protein belongs to the pseudouridine synthase TruD family.

It carries out the reaction uridine(13) in tRNA = pseudouridine(13) in tRNA. Responsible for synthesis of pseudouridine from uracil-13 in transfer RNAs. In Xanthomonas campestris pv. campestris (strain B100), this protein is tRNA pseudouridine synthase D.